The following is a 591-amino-acid chain: Alpha-(1-&gt;6)-mannopyranosyltransferase Rv1459c (591 aa).

Helical transmembrane passes span 40–60 (FGAT…ARPV), 80–100 (VSLT…LMLG), 117–137 (TLLL…KDVY), 201–221 (IVAA…LIVW), 235–255 (VSAL…VAGI), 259–279 (ALML…LDMA), 321–341 (EWGP…SSQV), 367–387 (LLLA…ILGW), 408–428 (WMSP…LLGL), 441–461 (AIGV…VLRG), 473–493 (LAVT…WAII), 502–522 (PGFR…GPTA), and 527–547 (FALF…ILLI). Positions 569-591 (ESASKTPATRRPTAAPDAYADST) are disordered. Residues 574 to 584 (TPATRRPTAAP) show a composition bias toward low complexity.

It belongs to the MptA/B family.

Its subcellular location is the membrane. Its function is as follows. Catalyzes the addition of alpha-(1-&gt;6)-mannose residue. The polypeptide is Alpha-(1-&gt;6)-mannopyranosyltransferase Rv1459c (Mycobacterium tuberculosis (strain ATCC 25618 / H37Rv)).